A 296-amino-acid chain; its full sequence is MKKLPLPARTYSEMLNKCSEGMMQINVRNNFITHFPTFLQKEQQYRILSSTGQLFTYDRTHPLEPTTLVVGNLTKVKLEKLYENNLRDKNKPARTYYDDMLVSSGEKCPFCGDIGQTKNIDHFLPIAHYPEFSVMPINLVPSCRDCNMGEKGQVFAVDEVHQAIHPYIDKDIFFREQWVYANFVSGTPGAISFYVECPANWRQEDKHRALHHFKLLNIANRYRLEAGKHLSEVITQRNSFVKVIRKYSSTATFQQLQSEFIEANLKPIIDLNDFPNYWKRVMYQCLANSEDFFRGI.

The polypeptide is Protein ea31 (ea31) (Escherichia phage lambda (Bacteriophage lambda)).